The following is a 284-amino-acid chain: Undecaprenyl-diphosphatase 2 (284 aa).

7 helical membrane passes run 6 to 26 (VIFILKSVIIAIVEGLTEFIP), 46 to 66 (FAEMFEVVIQLGAILAVVVLY), 94 to 114 (FGMNVIIGCIPFAIIGVLFYD), 119 to 139 (LFNLQSVIIGFIVGGILLLVV), 183 to 203 (IMGGWIAGLNSPTAAEFSFFL), 227 to 247 (TLWIALVVGFIVAFIVSIIVM), and 262 to 282 (FAVYRIIMGVVLAVLAFTNII).

This sequence belongs to the UppP family.

The protein resides in the cell membrane. The catalysed reaction is di-trans,octa-cis-undecaprenyl diphosphate + H2O = di-trans,octa-cis-undecaprenyl phosphate + phosphate + H(+). Functionally, catalyzes the dephosphorylation of undecaprenyl diphosphate (UPP). Confers resistance to bacitracin. The chain is Undecaprenyl-diphosphatase 2 from Clostridioides difficile (strain 630) (Peptoclostridium difficile).